The sequence spans 632 residues: MTKEEKNEKEALIEFFSSYRELFEFFCSNTTIHGAIRLVCSRRNRMKTAFWLVLFLVTFGLMYWQFGLLFGQYFSYPVSINLNVNSDKLPFPAVTVCTLNPYRYKAIQNDLQELDKETQRTLYELYKYNSTGVQGWIPNNQRVKRDRAGLPYLLELLPPGSETHRVSRSVIEEELQVKRREWNIGFKLCNETGGDCFYQTYTSGVDAIREWYRFHYINILARVPQEAAIDGEQLENFIFACRFNEESCTKANYSSFHHAIYGNCYTFNQNQSDQSNLWSSSMPGIKNGLTLVLRTEQHDYIPLLSSVAGARVLVHGHKEPAFMDDNGFNIPPGMETSIGMKKETINRLGGKYSDCSEDGSDVDVKNLFQSEYTEQVCVRSCFQAAMVARCGCGYAFYPLSPGDQYCDYNKHKSWGHCYYKLIIEFTSNKLGCFTKCRKPCLVSEYQLTAGYSKWPNRVSQDWVLHTLSRQYNLTDRNGIAKLNIYFEELNYKTILESPTINMAMLLSLLGSQWSLWFGSSVLSVVEMLELVIDFVIIGVMILLHRYYYKKANEGEETTVVPTPAPAFADLEQQVPHIPRGDLSQRQISVVADITPPPAYESLDLRSVGTLSSRSSSMRSNRSYYEENGGRRN.

Residues 1–49 are Cytoplasmic-facing; that stretch reads MTKEEKNEKEALIEFFSSYRELFEFFCSNTTIHGAIRLVCSRRNRMKTA. A helical transmembrane segment spans residues 50–70; sequence FWLVLFLVTFGLMYWQFGLLF. The Extracellular portion of the chain corresponds to 71–520; that stretch reads GQYFSYPVSI…SQWSLWFGSS (450 aa). 10 cysteine pairs are disulfide-bonded: Cys97/Cys264, Cys189/Cys196, Cys241/Cys248, Cys355/Cys440, Cys377/Cys417, Cys377/Cys436, Cys381/Cys432, Cys390/Cys417, Cys390/Cys440, and Cys392/Cys406. The helical transmembrane segment at 521–541 threads the bilayer; the sequence is VLSVVEMLELVIDFVIIGVMI. The Cytoplasmic portion of the chain corresponds to 542 to 632; the sequence is LLHRYYYKKA…YYEENGGRRN (91 aa). Residues 612-622 are compositionally biased toward low complexity; sequence SRSSSMRSNRS. Residues 612 to 632 are disordered; that stretch reads SRSSSMRSNRSYYEENGGRRN. Residues 623–632 show a composition bias toward basic and acidic residues; that stretch reads YYEENGGRRN.

This sequence belongs to the amiloride-sensitive sodium channel (TC 1.A.6) family. SCNN1A subfamily. Heterotrimer; containing an alpha/SCNN1A, a beta/SCNN1B and a gamma/SCNN1G subunit. Interacts with shroom1.

The protein localises to the apical cell membrane. It localises to the cell projection. The protein resides in the cilium. Its subcellular location is the cytoplasmic granule. It is found in the cytoplasm. The protein localises to the cytoplasmic vesicle. It localises to the secretory vesicle. The protein resides in the acrosome. Its subcellular location is the flagellum. The enzyme catalyses Na(+)(in) = Na(+)(out). Originally identified and characterized by its inhibition by the diuretic drug amiloride. Its function is as follows. This is one of the three pore-forming subunits of the heterotrimeric epithelial sodium channel (ENaC), a critical regulator of sodium balance and fluid homeostasis. ENaC operates in epithelial tissues, where it mediates the electrodiffusion of sodium ions from extracellular fluid through the apical membrane of cells, with water following osmotically. It plays a key role in maintaining sodium homeostasis through electrogenic sodium reabsorption in the kidneys. The sequence is that of Epithelial sodium channel subunit alpha from Xenopus laevis (African clawed frog).